The chain runs to 395 residues: Fractalkine (395 aa).

An N-terminal signal peptide occupies residues methionine 1–glycine 24. A chemokine and involved in interaction with ITGAV:ITGB3 and ITGA4:ITGB1 region spans residues glutamine 25–glycine 100. The Extracellular segment spans residues glutamine 25–threonine 336. Intrachain disulfides connect cysteine 32–cysteine 58 and cysteine 36–cysteine 74. The segment at glycine 101–threonine 336 is mucin-like stalk. 2 stretches are compositionally biased toward polar residues: residues alanine 148–alanine 172 and alanine 201–tryptophan 210. Disordered stretches follow at residues alanine 148 to lysine 180 and alanine 201 to glutamine 305. A compositionally biased stretch (low complexity) spans serine 218 to proline 236. Residues arginine 337–methionine 357 traverse the membrane as a helical segment. Residues phenylalanine 358–valine 395 lie on the Cytoplasmic side of the membrane.

This sequence belongs to the intercrine delta family. As to quaternary structure, monomer. Forms a ternary complex with CX3CR1 and ITGAV:ITGB3 or ITGA4:ITGB1. In terms of processing, a soluble short 80 kDa form may be released by proteolytic cleavage from the long membrane-anchored form. In terms of tissue distribution, highest levels in brain. Lower levels in kidney, heart and lung. Also found in skeletal muscle and testis. Highly expressed in lesional smooth muscle cells, but not macrophages. Low levels of ABCD-3 mRNA were also found in anti-CD40-stimulated splenic B-cells, but not in resting B-cells. Also expressed in dendritic cells.

It localises to the cell membrane. The protein localises to the secreted. Functionally, chemokine that acts as a ligand for both CX3CR1 and integrins ITGAV:ITGB3 and ITGA4:ITGB1. The CX3CR1-CX3CL1 signaling exerts distinct functions in different tissue compartments, such as immune response, inflammation, cell adhesion and chemotaxis. Regulates leukocyte adhesion and migration processes at the endothelium. Can activate integrins in both a CX3CR1-dependent and CX3CR1-independent manner. In the presence of CX3CR1, activates integrins by binding to the classical ligand-binding site (site 1) in integrins. In the absence of CX3CR1, binds to a second site (site 2) in integrins which is distinct from site 1 and enhances the binding of other integrin ligands to site 1. The soluble form is chemotactic for T-cells and monocytes, but not for neutrophils. In terms of biological role, the membrane-bound form promotes adhesion of those leukocytes to endothelial cells. This chain is Fractalkine, found in Mus musculus (Mouse).